Reading from the N-terminus, the 1410-residue chain is SNF2 domain-containing protein CLASSY 3 (1410 aa).

Over residues 1–12 the composition is skewed to basic residues; the sequence is MECIGKRVKSRS. Disordered stretches follow at residues 1–74, 87–108, 209–330, 344–376, 428–593, and 632–654; these read MECI…SVPN, DLNV…SEQN, GEIE…PIKR, RSGS…QREV, NVSK…LKDK, and EDEA…REDH. The Nuclear localization signal 1 signature appears at 22–29; that stretch reads RKKMETVA. Residues 95 to 108 are compositionally biased toward polar residues; the sequence is GPSSSRLTDGSEQN. Acidic residues predominate over residues 245-266; sequence SDGEDSSSETDEEEEENQDSED. Residues 248–278 are a coiled coil; it reads EDSSSETDEEEEENQDSEDNNTKDNVTVESL. Low complexity predominate over residues 276–301; sequence ESLSSEDPSSSSSSSSSSSSSSSSSS. A compositionally biased stretch (basic and acidic residues) spans 306-323; the sequence is SYVKEVVGDNRDDDDLRK. A Nuclear localization signal 2 motif is present at residues 328 to 335; it reads IKRVSLVE. Residues 351 to 376 show a composition bias toward basic and acidic residues; the sequence is KPRERDNKIQKLNHREEEKKERQREV. Residues 356–377 adopt a coiled-coil conformation; it reads DNKIQKLNHREEEKKERQREVV. Positions 428 to 446 are enriched in polar residues; that stretch reads NVSKYEDSVSINSGKTTGA. 2 stretches are compositionally biased toward basic and acidic residues: residues 450–463 and 488–504; these read PEVE…ELNT and EPSR…KEVQ. Over residues 576 to 587 the composition is skewed to low complexity; the sequence is SSISSGDGYESD. One can recognise a Helicase ATP-binding domain in the interval 850-1060; the sequence is FENSDETGGC…CNVLGLARPK (211 aa). 863–870 is an ATP binding site; sequence HAPGTGKT. The DEAH box signature appears at 1011-1014; the sequence is DEAH. Residues 1132–1139 carry the Nuclear localization signal 3 motif; the sequence is QRRVLESI. One can recognise a Helicase C-terminal domain in the interval 1206–1359; that stretch reads EFVELCEVIK…ELVFACSSRH (154 aa).

The protein belongs to the SNF2/RAD54 helicase family. In terms of assembly, interacts with NRPD1.

Its subcellular location is the nucleus. Probable chromatin remodeling factor. The sequence is that of SNF2 domain-containing protein CLASSY 3 (CLSY3) from Arabidopsis thaliana (Mouse-ear cress).